The chain runs to 501 residues: MEKPNPRRPSNSVLPYETPRLRDHYLLGKKLGQGQFGTTYLCTEKSSSANYACKSIPKRKLVCREDYEDVWREIQIMHHLSEHPNVVRIKGTYEDSVFVHIVMEVCEGGELFDRIVSKGCFSEREAAKLIKTILGVVEACHSLGVMHRDLKPENFLFDSPSDDAKLKATDFGLSVFYKPGQYLYDVVGSPYYVAPEVLKKCYGPEIDVWSAGVILYILLSGVPPFWAETESGIFRQILQGKIDFKSDPWPTISEGAKDLIYKMLDRSPKKRISAHEALCHPWIVDEHAAPDKPLDPAVLSRLKQFSQMNKIKKMALRVIAERLSEEEIGGLKELFKMIDTDNSGTITFEELKAGLKRVGSELMESEIKSLMDAADIDNSGTIDYGEFLAATLHINKMEREENLVVAFSYFDKDGSGYITIDELQQACTEFGLCDTPLDDMIKEIDLDNDGKIDFSEFTAMMKKGDGVGRSRTMRNNLNFNIAEAFGVEDTSSTAKSDDSPK.

The 259-residue stretch at 25-283 (YLLGKKLGQG…AHEALCHPWI (259 aa)) folds into the Protein kinase domain. Residues 31–39 (LGQGQFGTT) and K54 contribute to the ATP site. Residue D149 is the Proton acceptor of the active site. At S189 the chain carries Phosphoserine. The interval 289–319 (APDKPLDPAVLSRLKQFSQMNKIKKMALRVI) is autoinhibitory domain. EF-hand domains follow at residues 326–361 (EEIG…VGSE), 362–397 (LMES…INKM), 398–433 (EREE…FGLC), and 437–467 (LDDM…GDGV). Ca(2+) contacts are provided by D339, D341, S343, T345, E350, D375, D377, S379, T381, E386, D411, D413, S415, Y417, E422, D445, D447, D449, K451, and E456.

This sequence belongs to the protein kinase superfamily. Ser/Thr protein kinase family. CDPK subfamily. Interacts with Di19.

Its subcellular location is the cytoplasm. It is found in the nucleus. It catalyses the reaction L-seryl-[protein] + ATP = O-phospho-L-seryl-[protein] + ADP + H(+). It carries out the reaction L-threonyl-[protein] + ATP = O-phospho-L-threonyl-[protein] + ADP + H(+). With respect to regulation, activated by calcium. Autophosphorylation may play an important role in the regulation of the kinase activity. In terms of biological role, may play a role in signal transduction pathways that involve calcium as a second messenger. Functions as a regulator of the calcium-mediated abscisic acid (ABA) signaling pathway. Phosphorylates ABA-responsive transcription factors ABF1 and ABF4 in vitro. Phosphorylates the nuclear zinc finger Di19 in vitro. This Arabidopsis thaliana (Mouse-ear cress) protein is Calcium-dependent protein kinase 4 (CPK4).